Consider the following 274-residue polypeptide: MASPSSSSSLCSTFASPRAASLGRRLAFSSPRKAFRVRASSRVDKFSKNDIIVSPSILSANFSKLGEQVKAVEVAGCDWIHVDVMDGRFVPNITIGPLVVDALRPVTDLPLDVHLMIVEPEQRVPDFIKAGADIVSVHCEQSSTIHLHRTVNQIKSLGAKAGVVLNPATPLTAIDYVLDVVDLVLIMSVNPGFGGQSFIESQVKKIAELRRLCAEKGVNPWIEVDGGVGPKNAYKVIEAGANAIVAGSAVFGAPDYAEAIKGIKTSQKPVAVPA.

Residues methionine 1 to alanine 39 constitute a chloroplast transit peptide. Residue serine 56 participates in substrate binding. Positions 81, 83, and 114 each coordinate a divalent metal cation. Aspartate 83 acts as the Proton acceptor in catalysis. Substrate is bound by residues histidine 114, glycine 192–glycine 195, aspartate 225–glycine 227, and glycine 247–serine 248. Aspartate 225 is an a divalent metal cation binding site. Catalysis depends on aspartate 225, which acts as the Proton donor.

It belongs to the ribulose-phosphate 3-epimerase family. Homooctamer. Co(2+) serves as cofactor. It depends on Fe(2+) as a cofactor. Mn(2+) is required as a cofactor. Requires Zn(2+) as cofactor.

Its subcellular location is the plastid. It localises to the chloroplast thylakoid membrane. The catalysed reaction is D-ribulose 5-phosphate = D-xylulose 5-phosphate. The protein operates within carbohydrate biosynthesis; Calvin cycle. Catalyzes the reversible epimerization of D-ribulose 5-phosphate to D-xylulose 5-phosphate. The sequence is that of Ribulose-phosphate 3-epimerase, chloroplastic (RPE) from Oryza sativa subsp. japonica (Rice).